A 449-amino-acid polypeptide reads, in one-letter code: Signal recognition particle protein (449 aa).

Residues Gly109–Thr116, Asp191–Arg195, and Ser249–Asp252 each bind GTP.

The protein belongs to the GTP-binding SRP family. SRP54 subfamily. As to quaternary structure, part of the signal recognition particle protein translocation system, which is composed of SRP and FtsY. SRP is a ribonucleoprotein composed of Ffh and a 4.5S RNA molecule.

It localises to the cytoplasm. It catalyses the reaction GTP + H2O = GDP + phosphate + H(+). In terms of biological role, involved in targeting and insertion of nascent membrane proteins into the cytoplasmic membrane. Binds to the hydrophobic signal sequence of the ribosome-nascent chain (RNC) as it emerges from the ribosomes. The SRP-RNC complex is then targeted to the cytoplasmic membrane where it interacts with the SRP receptor FtsY. Interaction with FtsY leads to the transfer of the RNC complex to the Sec translocase for insertion into the membrane, the hydrolysis of GTP by both Ffh and FtsY, and the dissociation of the SRP-FtsY complex into the individual components. This chain is Signal recognition particle protein, found in Rickettsia prowazekii (strain Madrid E).